The sequence spans 470 residues: Glutamyl-tRNA reductase (470 aa).

Substrate contacts are provided by residues 49-52, Ser109, 114-116, and Gln120; these read TCNR and ESQ. Cys50 (nucleophile) is an active-site residue. NADP(+) is bound at residue 223–228; that stretch reads GAGAVG.

Belongs to the glutamyl-tRNA reductase family. As to quaternary structure, homodimer.

The enzyme catalyses (S)-4-amino-5-oxopentanoate + tRNA(Glu) + NADP(+) = L-glutamyl-tRNA(Glu) + NADPH + H(+). It functions in the pathway porphyrin-containing compound metabolism; protoporphyrin-IX biosynthesis; 5-aminolevulinate from L-glutamyl-tRNA(Glu): step 1/2. Functionally, catalyzes the NADPH-dependent reduction of glutamyl-tRNA(Glu) to glutamate 1-semialdehyde (GSA). The chain is Glutamyl-tRNA reductase from Frankia alni (strain DSM 45986 / CECT 9034 / ACN14a).